Reading from the N-terminus, the 395-residue chain is tRNA (guanine-N(7)-)-methyltransferase (395 aa).

S-adenosyl-L-methionine contacts are provided by Glu126, Glu151, and Asp178. 2 residues coordinate substrate: Lys204 and Asp234.

The protein belongs to the class I-like SAM-binding methyltransferase superfamily. TrmB family.

The catalysed reaction is guanosine(46) in tRNA + S-adenosyl-L-methionine = N(7)-methylguanosine(46) in tRNA + S-adenosyl-L-homocysteine. It functions in the pathway tRNA modification; N(7)-methylguanine-tRNA biosynthesis. Its function is as follows. Catalyzes the formation of N(7)-methylguanine at position 46 (m7G46) in tRNA. The sequence is that of tRNA (guanine-N(7)-)-methyltransferase from Campylobacter fetus subsp. fetus (strain 82-40).